The primary structure comprises 223 residues: Probable Brix domain-containing ribosomal biogenesis protein (223 aa).

The region spanning 1–196 (MMLITTSHRP…IWIMEDGRRW (196 aa)) is the Brix domain.

Its function is as follows. Probably involved in the biogenesis of the ribosome. The polypeptide is Probable Brix domain-containing ribosomal biogenesis protein (Pyrococcus furiosus (strain ATCC 43587 / DSM 3638 / JCM 8422 / Vc1)).